Here is a 206-residue protein sequence, read N- to C-terminus: Pyridoxine/pyridoxamine 5'-phosphate oxidase (206 aa).

Residues 53–58 (RMVLLK), 68–69 (YT), Lys75, and Gln97 contribute to the FMN site. Lys58 serves as a coordination point for substrate. Substrate-binding residues include Tyr115, Arg119, and Ser123. FMN-binding positions include 132 to 133 (QS) and Trp177. 183–185 (RLH) is a substrate binding site. An FMN-binding site is contributed by Arg187.

It belongs to the pyridoxamine 5'-phosphate oxidase family. As to quaternary structure, homodimer. Requires FMN as cofactor.

The catalysed reaction is pyridoxamine 5'-phosphate + O2 + H2O = pyridoxal 5'-phosphate + H2O2 + NH4(+). It catalyses the reaction pyridoxine 5'-phosphate + O2 = pyridoxal 5'-phosphate + H2O2. Its pathway is cofactor metabolism; pyridoxal 5'-phosphate salvage; pyridoxal 5'-phosphate from pyridoxamine 5'-phosphate: step 1/1. It functions in the pathway cofactor metabolism; pyridoxal 5'-phosphate salvage; pyridoxal 5'-phosphate from pyridoxine 5'-phosphate: step 1/1. In terms of biological role, catalyzes the oxidation of either pyridoxine 5'-phosphate (PNP) or pyridoxamine 5'-phosphate (PMP) into pyridoxal 5'-phosphate (PLP). This Rhizobium meliloti (strain 1021) (Ensifer meliloti) protein is Pyridoxine/pyridoxamine 5'-phosphate oxidase.